A 749-amino-acid polypeptide reads, in one-letter code: MAANKFATLIHRKTNRITLILVYAFLEWSLIFFILLNSLFSYFILRFADYFGLKRPCLFCSRLDRFFDASGKSPSHRDLLCDDHALQLHSKPVEESNCGFGEFHNDLVHRGCCVEKISSSLCAPIESDFGNLDYPIGDEGQIYNGLKFPRSIFVFEEEKVGSVNLNDSQEETEEKKVPQSHEKLEDDDVDEEFSCYVSSFDCKNKEIATEKEEENRVDLPIEVETAESAPKNLEFYIDEEDCHLIPVEFYKPSEEVREISDINGDFILDFGVEHDFTAAAETEEISDFASPGESKPEDAETNLVASEMENDDEETDAEVSIGTEIPDHEQIGDIPSHQLIPHHDDDDHEEETLEFKTVTIETKMPVLNINEERILEAQGSMESSHSSLHNAMFHLEQRVSVDGIECPEGVLTVDKLKFELQEERKALHALYEELEVERNASAVAASETMAMINRLHEEKAAMQMEALQYQRMMEEQAEFDQEALQLLNELMVNREKENAELEKELEVYRKRMEEYEAKEKMGMLRRRLRDSSVDSYRNNGDSDENSNGELQFKNVEGVTDWKYRENEMENTPVDVVLRLDECLDDYDGERLSILGRLKFLEEKLTDLNNEEDDEEEAKTFESNGSINGNEHIHGKETNGKHRVIKSKRLLPLFDAVDGEMENGLSNGNHHENGFDDSEKGENVTIEEEVDELYERLEALEADREFLRHCVGSLKKGDKGVHLLHEILQHLRDLRNIDLTRVRENGDMSL.

The chain crosses the membrane as a helical span at residues Ile17 to Asn37. Residues Asn164 to Leu184 form a disordered region. Basic and acidic residues predominate over residues Glu173–Leu184. The GTD-binding domain maps to Leu411–Arg509. Residues Glu589–Glu621 are a coiled coil. The segment at Asn608–Lys640 is disordered. The span at Glu630–Gly639 shows a compositional bias: basic and acidic residues. Residues Asp676–Val710 adopt a coiled-coil conformation.

Interacts with myosin XI-K and XI-1. As to expression, expressed in leaf epidermal cells, roots and root hairs.

The protein localises to the endomembrane system. Membrane-anchored myosin receptors that define a distinct, plant-specific transport vesicle compartment. In Arabidopsis thaliana (Mouse-ear cress), this protein is Myosin-binding protein 2.